Here is a 1372-residue protein sequence, read N- to C-terminus: DNA-directed RNA polymerase subunit beta (1372 aa).

This sequence belongs to the RNA polymerase beta chain family. The RNAP catalytic core consists of 2 alpha, 1 beta, 1 beta' and 1 omega subunit. When a sigma factor is associated with the core the holoenzyme is formed, which can initiate transcription.

The catalysed reaction is RNA(n) + a ribonucleoside 5'-triphosphate = RNA(n+1) + diphosphate. Its function is as follows. DNA-dependent RNA polymerase catalyzes the transcription of DNA into RNA using the four ribonucleoside triphosphates as substrates. In Rickettsia bellii (strain RML369-C), this protein is DNA-directed RNA polymerase subunit beta.